The sequence spans 750 residues: 1,4-alpha-glucan branching enzyme GlgB (750 aa).

Aspartate 425 functions as the Nucleophile in the catalytic mechanism. The active-site Proton donor is glutamate 478.

The protein belongs to the glycosyl hydrolase 13 family. GlgB subfamily. Monomer.

The enzyme catalyses Transfers a segment of a (1-&gt;4)-alpha-D-glucan chain to a primary hydroxy group in a similar glucan chain.. Its pathway is glycan biosynthesis; glycogen biosynthesis. Its function is as follows. Catalyzes the formation of the alpha-1,6-glucosidic linkages in glycogen by scission of a 1,4-alpha-linked oligosaccharide from growing alpha-1,4-glucan chains and the subsequent attachment of the oligosaccharide to the alpha-1,6 position. The sequence is that of 1,4-alpha-glucan branching enzyme GlgB from Cupriavidus pinatubonensis (strain JMP 134 / LMG 1197) (Cupriavidus necator (strain JMP 134)).